We begin with the raw amino-acid sequence, 316 residues long: MSDVSKASLPKAIFLMGPTASGKTALAIELRKVLPVELISVDSALIYRGMDIGTAKPTASELKAAPHRLLDILDPAQAYSAADFRRDALAEMAEITAAGRIPLLVGGTMLYFKALLEGLSPLPSAEPEIRARIEQQAAEQGWDVLHRQLQDIDPVAAARIHPNDPQRLSRALEVFFISGKTLTELTQTSGDALPYQVHQFAIAPASRELLHQRIEQRFHQMLASGFEAEVRALFARGDLHTDLPSIRCVGYRQMWSYIEGEISYDEMVYRGVCATRQLAKRQVTWLRGWEGVRWLDSEKPDQARNEVLQVVGAIAN.

Gly-17 to Thr-24 is an ATP binding site. Position 19–24 (Thr-19–Thr-24) interacts with substrate. Interaction with substrate tRNA regions lie at residues Asp-42 to Leu-45, Gln-166 to Arg-170, and Arg-247 to Arg-252.

Belongs to the IPP transferase family. Monomer. The cofactor is Mg(2+).

The catalysed reaction is adenosine(37) in tRNA + dimethylallyl diphosphate = N(6)-dimethylallyladenosine(37) in tRNA + diphosphate. In terms of biological role, catalyzes the transfer of a dimethylallyl group onto the adenine at position 37 in tRNAs that read codons beginning with uridine, leading to the formation of N6-(dimethylallyl)adenosine (i(6)A). The sequence is that of tRNA dimethylallyltransferase from Citrobacter koseri (strain ATCC BAA-895 / CDC 4225-83 / SGSC4696).